Here is a 200-residue protein sequence, read N- to C-terminus: NAD(P)H dehydrogenase (quinone) (200 aa).

In terms of domain architecture, Flavodoxin-like spans 7–199; that stretch reads LAIVFYSSTG…RQVELTAKLL (193 aa). FMN is bound by residues 13–18, 86–88, 121–127, and histidine 142; these read SSTGTG, TRF, and SAQNVNG.

This sequence belongs to the WrbA family. As to quaternary structure, homotetramer. Requires FMN as cofactor.

It catalyses the reaction a quinone + NADH + H(+) = a quinol + NAD(+). It carries out the reaction a quinone + NADPH + H(+) = a quinol + NADP(+). The chain is NAD(P)H dehydrogenase (quinone) from Deinococcus radiodurans (strain ATCC 13939 / DSM 20539 / JCM 16871 / CCUG 27074 / LMG 4051 / NBRC 15346 / NCIMB 9279 / VKM B-1422 / R1).